The primary structure comprises 215 residues: Osmoprotectant import permease protein OsmW (215 aa).

Positions Thr18 to Leu202 constitute an ABC transmembrane type-1 domain. 6 helical membrane passes run Leu24–Val44, Thr51–Ile73, Leu78–Ile100, Trp132–Met152, Asn153–Leu173, and Met183–His203.

Belongs to the binding-protein-dependent transport system permease family. In terms of assembly, the complex is composed of two ATP-binding proteins (OsmV), two transmembrane proteins (OsmW and OsmY) and a solute-binding protein (OsmX).

It localises to the cell inner membrane. In terms of biological role, part of the OsmU ABC transporter complex, which is involved in the uptake of osmoprotectants such as choline-O-sulfate and glycine betaine. Probably responsible for the translocation of the substrate across the membrane. This is Osmoprotectant import permease protein OsmW (osmW) from Salmonella typhimurium (strain LT2 / SGSC1412 / ATCC 700720).